The sequence spans 355 residues: Tyrosine recombinase XerC (355 aa).

One can recognise a Core-binding (CB) domain in the interval Thr-4–Tyr-89. The segment at Lys-137–Thr-181 is disordered. Residues Gly-141–Lys-154 are compositionally biased toward low complexity. The region spanning Lys-158–Gly-349 is the Tyr recombinase domain. The span at Ala-168–Ala-178 shows a compositional bias: basic and acidic residues. Residues Arg-200, Lys-224, His-301, Arg-304, and His-327 contribute to the active site. Tyr-336 (O-(3'-phospho-DNA)-tyrosine intermediate) is an active-site residue.

The protein belongs to the 'phage' integrase family. XerC subfamily. Forms a cyclic heterotetrameric complex composed of two molecules of XerC and two molecules of XerD.

It localises to the cytoplasm. Site-specific tyrosine recombinase, which acts by catalyzing the cutting and rejoining of the recombining DNA molecules. The XerC-XerD complex is essential to convert dimers of the bacterial chromosome into monomers to permit their segregation at cell division. It also contributes to the segregational stability of plasmids. The polypeptide is Tyrosine recombinase XerC (Bifidobacterium longum (strain DJO10A)).